The sequence spans 252 residues: Probable phosphatase SO_1652 (252 aa).

Positions 8, 10, 16, 41, 74, 102, 132, 193, and 195 each coordinate Zn(2+).

This sequence belongs to the PHP family. Requires Zn(2+) as cofactor.

This is Probable phosphatase SO_1652 from Shewanella oneidensis (strain ATCC 700550 / JCM 31522 / CIP 106686 / LMG 19005 / NCIMB 14063 / MR-1).